A 237-amino-acid chain; its full sequence is NAD(P)H-hydrate epimerase (237 aa).

The YjeF N-terminal domain occupies 11–223 (AASLDRDLMN…GLDIPEYPGV (213 aa)). A (6S)-NADPHX-binding site is contributed by 61-65 (NNGGD). Positions 62 and 123 each coordinate K(+). (6S)-NADPHX is bound by residues 127–133 (GFSFSGP) and aspartate 156. Serine 159 contributes to the K(+) binding site.

The protein belongs to the NnrE/AIBP family. Requires K(+) as cofactor.

The protein resides in the cytoplasm. The protein localises to the mitochondrion. It catalyses the reaction (6R)-NADHX = (6S)-NADHX. The catalysed reaction is (6R)-NADPHX = (6S)-NADPHX. Functionally, catalyzes the epimerization of the S- and R-forms of NAD(P)HX, a damaged form of NAD(P)H that is a result of enzymatic or heat-dependent hydration. This is a prerequisite for the S-specific NAD(P)H-hydrate dehydratase to allow the repair of both epimers of NAD(P)HX. The protein is NAD(P)H-hydrate epimerase of Ajellomyces capsulatus (strain G186AR / H82 / ATCC MYA-2454 / RMSCC 2432) (Darling's disease fungus).